The primary structure comprises 535 residues: Light-independent protochlorophyllide reductase subunit B (535 aa).

Residue Asp-36 participates in [4Fe-4S] cluster binding. The active-site Proton donor is Asp-287. Residue 422-423 (GL) coordinates substrate.

The protein belongs to the ChlB/BchB/BchZ family. Protochlorophyllide reductase is composed of three subunits; BchL, BchN and BchB. Forms a heterotetramer of two BchB and two BchN subunits. It depends on [4Fe-4S] cluster as a cofactor.

It carries out the reaction chlorophyllide a + oxidized 2[4Fe-4S]-[ferredoxin] + 2 ADP + 2 phosphate = protochlorophyllide a + reduced 2[4Fe-4S]-[ferredoxin] + 2 ATP + 2 H2O. Its pathway is porphyrin-containing compound metabolism; bacteriochlorophyll biosynthesis (light-independent). Its function is as follows. Component of the dark-operative protochlorophyllide reductase (DPOR) that uses Mg-ATP and reduced ferredoxin to reduce ring D of protochlorophyllide (Pchlide) to form chlorophyllide a (Chlide). This reaction is light-independent. The NB-protein (BchN-BchB) is the catalytic component of the complex. The polypeptide is Light-independent protochlorophyllide reductase subunit B (Rhodopseudomonas palustris (strain BisB5)).